Reading from the N-terminus, the 699-residue chain is MSKINKLEHIRNIGICAHIDAGKTTTTERILYYTGKSHKIGEVHEGGATMDWMEQEQERGITITSAATTCRWQDKIINIIDTPGHVDFTIEVERSLRVLDGAVAVFDGVAGVEPQSETVWRQADKYNVPRMCFVNKMDRMGADFYRCVEMLKDRLGAKPLVIQLPVGIEENFKGIIDLIKMKAVIWKDEALGAEYFEEDIPADMKDKAEEYRAKLLDMVVELDDHVMEKYLSGEEVTAEEIKRLIRKGTISAAFYPVLCGSAFKNKGVQPLLDAVVDFLPSPIDIGIVKGMEVSTGEETDFPISVTEPFAALAFKIMNDPFVGSLTFIRIYSGKITSGTTVINTVKNKREKIGRMLLMHANNREDVKEASAGDIVALAGLKDTTTGDTLSDIDQQVILERMEFPEPVIELAVEPKSTADQEKMGLALSRLAAEDPSFRVSTDYETGQTVIKGMGELHLEIIIDRMRREFKVEANIGAPQVAYRETITKVCEIDYTHKKQSGGAGQFARVKIIFEPLKEVKDLKDEDKNKNFVFESKIIGGAVPKEYIPGVEKGLNNIRETGVIAGYPMIDFKATLVDGAFHDVDSSVLAFEIAAKAAFREGMPKGNPKLLEPIMQVEVITPDEYMGDIIGDLNSRRGQIQSMDPRGNAQVVTANVPLAEMFGYVNTLRSLSQGRAQFSMIFSHYDQVPSQVADIIKAKK.

Positions 8-283 (EHIRNIGICA…AVVDFLPSPI (276 aa)) constitute a tr-type G domain. GTP is bound by residues 17-24 (AHIDAGKT), 81-85 (DTPGH), and 135-138 (NKMD).

Belongs to the TRAFAC class translation factor GTPase superfamily. Classic translation factor GTPase family. EF-G/EF-2 subfamily.

Its subcellular location is the cytoplasm. Its function is as follows. Catalyzes the GTP-dependent ribosomal translocation step during translation elongation. During this step, the ribosome changes from the pre-translocational (PRE) to the post-translocational (POST) state as the newly formed A-site-bound peptidyl-tRNA and P-site-bound deacylated tRNA move to the P and E sites, respectively. Catalyzes the coordinated movement of the two tRNA molecules, the mRNA and conformational changes in the ribosome. The chain is Elongation factor G from Rickettsia rickettsii (strain Iowa).